The sequence spans 476 residues: RuvB-like helicase 2 (476 aa).

Position 72–80 (72–80 (VGPPSTGKT)) interacts with ATP.

It belongs to the RuvB family. In terms of assembly, may form heterododecamers with RVB1. Component of the SWR1 chromatin remodeling complex, the INO80 chromatin remodeling complex, and of the R2TP complex.

The protein resides in the nucleus. The catalysed reaction is ATP + H2O = ADP + phosphate + H(+). Its function is as follows. DNA helicase which participates in several chromatin remodeling complexes, including the SWR1 and the INO80 complexes. The SWR1 complex mediates the ATP-dependent exchange of histone H2A for the H2A variant HZT1 leading to transcriptional regulation of selected genes by chromatin remodeling. The INO80 complex remodels chromatin by shifting nucleosomes and is involved in DNA repair. Also involved in pre-rRNA processing. This chain is RuvB-like helicase 2 (RVB2), found in Mycosarcoma maydis (Corn smut fungus).